Consider the following 115-residue polypeptide: Photosystem II reaction center Psb28 protein (115 aa).

It belongs to the Psb28 family. Part of the photosystem II complex.

It localises to the plastid. The protein localises to the chloroplast thylakoid membrane. The protein is Photosystem II reaction center Psb28 protein of Phaeodactylum tricornutum (strain CCAP 1055/1).